The primary structure comprises 146 residues: Leghemoglobin alpha (146 aa).

In terms of domain architecture, Globin spans 3-146 (AFTEKQEALV…LAAAIKKAYA (144 aa)). Tyrosine 26 and tyrosine 31 each carry nitrated tyrosine. Serine 46 provides a ligand contact to heme b. Serine 46 is subject to Phosphoserine. O2 is bound at residue histidine 62. Residues histidine 93 and lysine 96 each coordinate heme b. At tyrosine 134 the chain carries Nitrated tyrosine.

The protein belongs to the plant globin family. In terms of assembly, monomer. Post-translationally, nitrated mainly at Tyr-31 and, to a lower extent, at Tyr-26 and Tyr-134, in effective nodules and particularly in hypoxic conditions; this mechanism may play a protective role in the symbiosis by buffering toxic peroxynitrite NO(2)(-). Nitration level decrease during nodule senescence. Phosphorylation at Ser-46 disrupts the molecular environment of its porphyrin ring oxygen binding pocket, thus leading to a reduced oxygen consumption and to the delivery of oxygen O(2) to symbiosomes. As to expression, root nodules.

The protein resides in the cytoplasm. It is found in the cytosol. The protein localises to the nucleus. Functionally, leghemoglobin that reversibly binds oxygen O(2) through a pentacoordinated heme iron. In root nodules, facilitates the diffusion of oxygen to the bacteroids while preventing the bacterial nitrogenase from being inactivated by buffering dioxygen, nitric oxide and carbon monoxide, and promoting the formation of reactive oxygen species (ROS, e.g. H(2)O(2)). This role is essential for symbiotic nitrogen fixation (SNF). The protein is Leghemoglobin alpha of Phaseolus vulgaris (Kidney bean).